The primary structure comprises 737 residues: Palmitoyltransferase AKR1 (737 aa).

The interval 1–47 (MKQIDSEDSITVPNDTPEDNSASSMQPVMSNLSIEEHQSENEPIEQE) is disordered. The Cytoplasmic portion of the chain corresponds to 1 to 304 (MKQIDSEDSI…VYFKKSLHTK (304 aa)). The segment covering 9–33 (SITVPNDTPEDNSASSMQPVMSNLS) has biased composition (polar residues). ANK repeat units lie at residues 54 to 84 (PLLS…DLKH), 90 to 119 (ERVS…DVNF), 124 to 153 (LNAT…DPSV), 157 to 190 (QGFN…DIDC), 194 to 223 (NGRT…SVKA), and 227 to 256 (GGFT…DFFQ). Transmembrane regions (helical) follow at residues 305-325 (LVTF…FASI) and 326-346 (HPIF…YTLK). At 347–364 (KYVIPAYAQRNTRQSFLK) the chain is on the cytoplasmic side. The chain crosses the membrane as a helical span at residues 365–385 (TPFLAGVFSGSVFWASYTWLT). Residues 386 to 396 (RIMPLTLIEEP) lie on the Lumenal side of the membrane. The helical transmembrane segment at 397–417 (ITNLLFFAGVVLLASLFVKLV) threads the bilayer. Topologically, residues 418–493 (RSDPGLIPEE…YNDIGLRNHK (76 aa)) are cytoplasmic. One can recognise a DHHC domain in the interval 450 to 500 (HFCISTWVRKPIRSKFSNFSRALVTRFDHFCPWIYNDIGLRNHKTFLFFIL). Cys-480 acts as the S-palmitoyl cysteine intermediate in catalysis. Residues 494–514 (TFLFFILCLETCIFVFLKLCM) form a helical membrane-spanning segment. Residues 515–547 (EYFDVLEDTFEDDYDLNCGIFGEDLCAGFFFDT) lie on the Lumenal side of the membrane. Residues 548–568 (FTFLVLAWTCFQGIWVGFLTF) traverse the membrane as a helical segment. At 569 to 737 (VQLFQTAKGV…ERHYLAEEIV (169 aa)) the chain is on the cytoplasmic side.

The protein belongs to the DHHC palmitoyltransferase family. AKR/ZDHHC17 subfamily.

It is found in the early endosome membrane. Its subcellular location is the golgi apparatus membrane. It carries out the reaction L-cysteinyl-[protein] + hexadecanoyl-CoA = S-hexadecanoyl-L-cysteinyl-[protein] + CoA. Its function is as follows. Palmitoyltransferase specific for casein kinase 1. This is Palmitoyltransferase AKR1 (AKR1) from Lachancea kluyveri (strain ATCC 58438 / CBS 3082 / BCRC 21498 / NBRC 1685 / JCM 7257 / NCYC 543 / NRRL Y-12651) (Yeast).